The primary structure comprises 132 residues: Phosphoribosyl-AMP cyclohydrolase (132 aa).

Asp-82 is a Mg(2+) binding site. Cys-83 lines the Zn(2+) pocket. Residues Asp-84 and Asp-86 each contribute to the Mg(2+) site. Residues Cys-99 and Cys-106 each coordinate Zn(2+).

It belongs to the PRA-CH family. Homodimer. Mg(2+) serves as cofactor. The cofactor is Zn(2+).

It is found in the cytoplasm. It catalyses the reaction 1-(5-phospho-beta-D-ribosyl)-5'-AMP + H2O = 1-(5-phospho-beta-D-ribosyl)-5-[(5-phospho-beta-D-ribosylamino)methylideneamino]imidazole-4-carboxamide. Its pathway is amino-acid biosynthesis; L-histidine biosynthesis; L-histidine from 5-phospho-alpha-D-ribose 1-diphosphate: step 3/9. In terms of biological role, catalyzes the hydrolysis of the adenine ring of phosphoribosyl-AMP. This Paramagnetospirillum magneticum (strain ATCC 700264 / AMB-1) (Magnetospirillum magneticum) protein is Phosphoribosyl-AMP cyclohydrolase.